The primary structure comprises 1269 residues: MTQDSEVLLWHTVLQRHRNYVHSCIGDFTLDRSSLATAEADTTSVKGPRSSKKRKELQLCLATQDCVELYDVSNGTLDALGKWPIAATILSMTKLNMDRCSHTILVLITDSGNLTFWQFERDSVSGKVYVRTLANEPISRSGIRRFVPQYQMVSDPQSRCVFFSGIERSKMCVLADWQRGKLVVGSPIEIQRSDRITLASAACDVSFDNPVNAAIEVESGTNDYYLSFYTMDLGLNTLLLRKEHLLEDKSINFVMQCPNLQQYKIKTRPNDETDQDSVNPFVICGYDGYLTLIDLEGFYEVSVQLPVRKTVSSTNIINGTIHKLKKDFFILMQSNHGDMYKVGIIPDEETKAPVLEIAYFDTLPTSEDIHIFKSGALFNVSEFGTSYLTQFESLGEDLEKITSYTPGRRSFIETESTLKNLSILDSLTSLNPLTSFHASNSTPLTILAAANQTENLVKLTSAVDFEELISTTLPRIPSKLWTVRIPKNETHSLIFLSMETSTTILKIHEGTVEDFGGDSNPFILNKPSLFVGAMVQRSIIQVTRDCLLQIIEMHDGPYTKKLEWYPPAGVGIVTAFCNETQLVVALTNHEICYFEIIEDSLNELQDRVEMDSTVNSIALLAGQKSGYCVLGCEDSSLQILNLQSKHPDFFTICAIQSLISKPHSLLFMRDTSDLKIHVGMKSGVYLSSKLNINDGTVFDVRTRFVGTKPVQVNLLDNIDINHKDDDDDEPGENDSKIDDFKKKISDFTPLVVLNSSISWVTYEIDDKITLRPLKTDEGITLKHINAFITDDIKRNGCCSITSKGQLLIGKLDNFLSWSNWFNEKKYTLVNDELKNAGNEEEDEDEDEDEDEDASEKYEIVGYQSQRILSDTTDNSLSYVISKTANKETSLSAIRDDKLLATNNGNTVVIIAKEVFNAVCSCNFGTNVKYIVISTESGKFIVIQIRVKNNVLETQYIHETMVHSKVNAMVSFGDKLACCILGNVVLFGLGKKQLLRKSITEMPPYITQVTALDQWDGTMLAVGDIRESVTIFKYDIDNNSFIGVADDIVKRHVTTVKFIDVSSVIGGDRFGNCWVLRVNYESDTRVASNIKACQYTLETLCHMYMNDTPMKFEIVNHMNMSDRPAILWIGLQGTIGCFVPLITRKEQQLYQSFQSTYAELDVLHFQDNNKPEEVDLEETEGALDEAYHTTKNTDHQDYVEGVISRVGRDFLSYRSSYAPSKNIIDGETLEQLTTYLPSDQRWIASKMKHADSGKLDIFNKYINEMRTNYV.

Belongs to the RSE1 family. Associated with the spliceosome.

The protein resides in the nucleus. Its function is as follows. Involved in pre-mRNA splicing and cell cycle control. The protein is Pre-mRNA-splicing factor RSE1 (RSE1) of Kluyveromyces lactis (strain ATCC 8585 / CBS 2359 / DSM 70799 / NBRC 1267 / NRRL Y-1140 / WM37) (Yeast).